Consider the following 686-residue polypeptide: Probable ferric reductase transmembrane component (686 aa).

Helical transmembrane passes span 23-43, 79-99, 111-131, 147-167, 178-198, 205-225, and 256-276; these read LSGW…VPVV, TLWL…VGSA, VAAA…PLPY, VVVL…ATSG, WMGA…LPAV, TFYY…HVHS, and VTVV…ADLV. In terms of domain architecture, Ferric oxidoreductase spans 108–666; that stretch reads LGRVAAAFMP…LAAGPQALVE (559 aa). 308–314 contributes to the FAD binding site; sequence HPFTVAS. Residues 392–412 traverse the membrane as a helical segment; it reads LMVVGGSAISFGLPFLRILNF. NAD(+) is bound at residue 431–439; the sequence is ILSQFRSNF. Asn506 and Asn644 each carry an N-linked (GlcNAc...) asparagine glycan.

Requires FAD as cofactor.

Its subcellular location is the membrane. It catalyses the reaction 2 a Fe(II)-siderophore + NAD(+) + H(+) = 2 a Fe(III)-siderophore + NADH. Functionally, is required for the uptake of Fe(3+) ions. May participate in the transport of electrons from cytoplasm to an extracellular substrate (Fe(3+) ion) via FAD and heme intermediates. Involved in iron homeostasis. This chain is Probable ferric reductase transmembrane component (FRE8), found in Eremothecium gossypii (strain ATCC 10895 / CBS 109.51 / FGSC 9923 / NRRL Y-1056) (Yeast).